Consider the following 287-residue polypeptide: Glutamate racemase (287 aa).

Residues 32-33 (DS) and 64-65 (YG) contribute to the substrate site. The active-site Proton donor/acceptor is the cysteine 96. Substrate is bound at residue 97–98 (NT). The active-site Proton donor/acceptor is cysteine 208. Residue 209-210 (TH) participates in substrate binding.

The protein belongs to the aspartate/glutamate racemases family.

The enzyme catalyses L-glutamate = D-glutamate. The protein operates within cell wall biogenesis; peptidoglycan biosynthesis. Its function is as follows. Provides the (R)-glutamate required for cell wall biosynthesis. The chain is Glutamate racemase from Yersinia enterocolitica serotype O:8 / biotype 1B (strain NCTC 13174 / 8081).